We begin with the raw amino-acid sequence, 126 residues long: MLRTMLQGKLHRVKVTQADLHYEGSCAMDQNFMDAAGILEYEAIDIYNVDNGERFSTYAIAAERGSRIISVNGAAARRAAVGDKLIICSYVQIPNEDARHHKPNIAYFDGDNIMRRIAKAVPVQVA.

Serine 25 acts as the Schiff-base intermediate with substrate; via pyruvic acid in catalysis. Residue serine 25 is modified to Pyruvic acid (Ser). Threonine 57 contacts substrate. Tyrosine 58 (proton donor) is an active-site residue. Glycine 73–alanine 75 contributes to the substrate binding site.

It belongs to the PanD family. In terms of assembly, heterooctamer of four alpha and four beta subunits. Requires pyruvate as cofactor. Post-translationally, is synthesized initially as an inactive proenzyme, which is activated by self-cleavage at a specific serine bond to produce a beta-subunit with a hydroxyl group at its C-terminus and an alpha-subunit with a pyruvoyl group at its N-terminus.

It is found in the cytoplasm. It carries out the reaction L-aspartate + H(+) = beta-alanine + CO2. It functions in the pathway cofactor biosynthesis; (R)-pantothenate biosynthesis; beta-alanine from L-aspartate: step 1/1. In terms of biological role, catalyzes the pyruvoyl-dependent decarboxylation of aspartate to produce beta-alanine. In Photorhabdus laumondii subsp. laumondii (strain DSM 15139 / CIP 105565 / TT01) (Photorhabdus luminescens subsp. laumondii), this protein is Aspartate 1-decarboxylase.